The sequence spans 663 residues: Bifunctional polymyxin resistance protein ArnA (663 aa).

The segment at 1-307 (MSSKAVVFAY…ELGLVDGSVL (307 aa)) is formyltransferase ArnAFT. Histidine 106 (proton donor; for formyltransferase activity) is an active-site residue. Residues arginine 116 and 138–142 (VKRAD) each bind (6R)-10-formyltetrahydrofolate. Positions 317–663 (RRTRVLILGV…EAMLEIADKK (347 aa)) are dehydrogenase ArnADH. NAD(+) contacts are provided by residues aspartate 350 and 371 to 372 (DI). UDP-alpha-D-glucuronate-binding positions include alanine 396, tyrosine 401, and 435–436 (TS). Glutamate 437 acts as the Proton acceptor; for decarboxylase activity in catalysis. UDP-alpha-D-glucuronate contacts are provided by residues arginine 463, asparagine 494, 528–537 (RLFDGGEQKR), and tyrosine 615. Residue arginine 621 is the Proton donor; for decarboxylase activity of the active site.

It in the N-terminal section; belongs to the Fmt family. UDP-L-Ara4N formyltransferase subfamily. The protein in the C-terminal section; belongs to the NAD(P)-dependent epimerase/dehydratase family. UDP-glucuronic acid decarboxylase subfamily. Homohexamer, formed by a dimer of trimers.

It catalyses the reaction UDP-alpha-D-glucuronate + NAD(+) = UDP-beta-L-threo-pentopyranos-4-ulose + CO2 + NADH. The enzyme catalyses UDP-4-amino-4-deoxy-beta-L-arabinose + (6R)-10-formyltetrahydrofolate = UDP-4-deoxy-4-formamido-beta-L-arabinose + (6S)-5,6,7,8-tetrahydrofolate + H(+). It functions in the pathway nucleotide-sugar biosynthesis; UDP-4-deoxy-4-formamido-beta-L-arabinose biosynthesis; UDP-4-deoxy-4-formamido-beta-L-arabinose from UDP-alpha-D-glucuronate: step 1/3. It participates in nucleotide-sugar biosynthesis; UDP-4-deoxy-4-formamido-beta-L-arabinose biosynthesis; UDP-4-deoxy-4-formamido-beta-L-arabinose from UDP-alpha-D-glucuronate: step 3/3. The protein operates within bacterial outer membrane biogenesis; lipopolysaccharide biosynthesis. In terms of biological role, bifunctional enzyme that catalyzes the oxidative decarboxylation of UDP-glucuronic acid (UDP-GlcUA) to UDP-4-keto-arabinose (UDP-Ara4O) and the addition of a formyl group to UDP-4-amino-4-deoxy-L-arabinose (UDP-L-Ara4N) to form UDP-L-4-formamido-arabinose (UDP-L-Ara4FN). The modified arabinose is attached to lipid A and is required for resistance to polymyxin and cationic antimicrobial peptides. This is Bifunctional polymyxin resistance protein ArnA from Pseudomonas fluorescens (strain SBW25).